We begin with the raw amino-acid sequence, 308 residues long: Phosphoribosylaminoimidazole-succinocarboxamide synthase (308 aa).

Belongs to the SAICAR synthetase family.

It catalyses the reaction 5-amino-1-(5-phospho-D-ribosyl)imidazole-4-carboxylate + L-aspartate + ATP = (2S)-2-[5-amino-1-(5-phospho-beta-D-ribosyl)imidazole-4-carboxamido]succinate + ADP + phosphate + 2 H(+). It participates in purine metabolism; IMP biosynthesis via de novo pathway; 5-amino-1-(5-phospho-D-ribosyl)imidazole-4-carboxamide from 5-amino-1-(5-phospho-D-ribosyl)imidazole-4-carboxylate: step 1/2. This is Phosphoribosylaminoimidazole-succinocarboxamide synthase from Xanthomonas euvesicatoria pv. vesicatoria (strain 85-10) (Xanthomonas campestris pv. vesicatoria).